The sequence spans 342 residues: Large ribosomal subunit protein uL3 (342 aa).

It belongs to the universal ribosomal protein uL3 family. As to quaternary structure, part of the 50S ribosomal subunit. Forms a cluster with proteins L14 and L24e.

Functionally, one of the primary rRNA binding proteins, it binds directly near the 3'-end of the 23S rRNA, where it nucleates assembly of the 50S subunit. The protein is Large ribosomal subunit protein uL3 of Pyrobaculum islandicum (strain DSM 4184 / JCM 9189 / GEO3).